A 71-amino-acid polypeptide reads, in one-letter code: Beta-defensin 9 (71 aa).

An N-terminal signal peptide occupies residues 1–23 (MRTLCSLLLICCLLFSYDTPVVG). Intrachain disulfides connect C37-C66, C44-C59, and C49-C67.

It belongs to the beta-defensin family.

Its subcellular location is the secreted. In terms of biological role, has antibacterial activity. This Rattus norvegicus (Rat) protein is Beta-defensin 9 (Defb9).